Here is a 105-residue protein sequence, read N- to C-terminus: Signal peptidase complex subunit 1 (105 aa).

Topologically, residues 1–32 are cytoplasmic; that stretch reads MDGMIAMLPAPLQKLSSHIDFQGQKVAERTYQ. The helical transmembrane segment at 33 to 53 threads the bilayer; it reads VILTIAGIIGFLVGFWTQQLS. Residues 54 to 56 are Lumenal-facing; it reads YAM. The chain crosses the membrane as a helical span at residues 57-77; that stretch reads FTVLGASAFTALIILPPWPFL. At 78–105 the chain is on the cytoplasmic side; sequence FRKNPIVWHTPAEPQESGDKKKETKKTK.

It belongs to the SPCS1 family. As to quaternary structure, component of the signal peptidase complex (SPC) composed of a catalytic subunit sec-11 and three accessory subunits spcs-1, spcs-2 and spcs-3. The complex induces a local thinning of the ER membrane which is used to measure the length of the signal peptide (SP) h-region of protein substrates. This ensures the selectivity of the complex towards h-regions shorter than 18-20 amino acids.

The protein resides in the endoplasmic reticulum membrane. Functionally, component of the signal peptidase complex (SPC) which catalyzes the cleavage of N-terminal signal sequences from nascent proteins as they are translocated into the lumen of the endoplasmic reticulum. Dispensable for SPC enzymatic activity. The polypeptide is Signal peptidase complex subunit 1 (Caenorhabditis elegans).